A 231-amino-acid polypeptide reads, in one-letter code: Large ribosomal subunit protein uL1 (231 aa).

The protein belongs to the universal ribosomal protein uL1 family. As to quaternary structure, part of the 50S ribosomal subunit.

Functionally, binds directly to 23S rRNA. The L1 stalk is quite mobile in the ribosome, and is involved in E site tRNA release. In terms of biological role, protein L1 is also a translational repressor protein, it controls the translation of the L11 operon by binding to its mRNA. This chain is Large ribosomal subunit protein uL1, found in Desulforudis audaxviator (strain MP104C).